The primary structure comprises 529 residues: Bifunctional purine biosynthesis protein PurH (529 aa).

The 148-residue stretch at 1-148 (MQQRRPIRRA…KNHKDVAIVV (148 aa)) folds into the MGS-like domain.

Belongs to the PurH family.

The catalysed reaction is (6R)-10-formyltetrahydrofolate + 5-amino-1-(5-phospho-beta-D-ribosyl)imidazole-4-carboxamide = 5-formamido-1-(5-phospho-D-ribosyl)imidazole-4-carboxamide + (6S)-5,6,7,8-tetrahydrofolate. It carries out the reaction IMP + H2O = 5-formamido-1-(5-phospho-D-ribosyl)imidazole-4-carboxamide. Its pathway is purine metabolism; IMP biosynthesis via de novo pathway; 5-formamido-1-(5-phospho-D-ribosyl)imidazole-4-carboxamide from 5-amino-1-(5-phospho-D-ribosyl)imidazole-4-carboxamide (10-formyl THF route): step 1/1. The protein operates within purine metabolism; IMP biosynthesis via de novo pathway; IMP from 5-formamido-1-(5-phospho-D-ribosyl)imidazole-4-carboxamide: step 1/1. The protein is Bifunctional purine biosynthesis protein PurH of Pectobacterium carotovorum subsp. carotovorum (strain PC1).